Consider the following 140-residue polypeptide: Lipoprotein MlpG (140 aa).

Positions 1 to 17 are cleaved as a signal peptide; that stretch reads MKIINILFCLFLLMLNG. A lipid anchor (N-palmitoyl cysteine) is attached at Cys-18. Cys-18 is lipidated: S-diacylglycerol cysteine. The tract at residues 22–57 is disordered; it reads DTNTKQTKSRQKRDLTQKEATQEKPKSKSKEDLLRE. The segment covering 33–57 has biased composition (basic and acidic residues); sequence KRDLTQKEATQEKPKSKSKEDLLRE.

It belongs to the Multicopy lipoprotein (Mlp) family.

The protein localises to the cell outer membrane. In terms of biological role, an outer membrane protein that may participate in pathogenesis. Some human Lyme disease patients have antibodies against this protein. The Mlp proteins probably undergo intragenic recombination, generating new alleles. The polypeptide is Lipoprotein MlpG (Borreliella burgdorferi (strain ATCC 35210 / DSM 4680 / CIP 102532 / B31) (Borrelia burgdorferi)).